A 400-amino-acid polypeptide reads, in one-letter code: NADH-quinone oxidoreductase subunit D (400 aa).

It belongs to the complex I 49 kDa subunit family. As to quaternary structure, NDH-1 is composed of 14 different subunits. Subunits NuoB, C, D, E, F, and G constitute the peripheral sector of the complex.

The protein localises to the cell inner membrane. The catalysed reaction is a quinone + NADH + 5 H(+)(in) = a quinol + NAD(+) + 4 H(+)(out). Its function is as follows. NDH-1 shuttles electrons from NADH, via FMN and iron-sulfur (Fe-S) centers, to quinones in the respiratory chain. The immediate electron acceptor for the enzyme in this species is believed to be a menaquinone. Couples the redox reaction to proton translocation (for every two electrons transferred, four hydrogen ions are translocated across the cytoplasmic membrane), and thus conserves the redox energy in a proton gradient. This is NADH-quinone oxidoreductase subunit D from Pelodictyon phaeoclathratiforme (strain DSM 5477 / BU-1).